Reading from the N-terminus, the 359-residue chain is 5-amino-6-(D-ribitylamino)uracil--L-tyrosine 4-hydroxyphenyl transferase (359 aa).

In terms of domain architecture, Radical SAM core spans 45 to 282 (VTYVLNANIN…VYAISRIFFK (238 aa)). 3 residues coordinate [4Fe-4S] cluster: Cys59, Cys63, and Cys66.

The protein belongs to the radical SAM superfamily. CofH family. Consists of two subunits, CofG and CofH. It depends on [4Fe-4S] cluster as a cofactor.

It carries out the reaction 5-amino-6-(D-ribitylamino)uracil + L-tyrosine + S-adenosyl-L-methionine = 5-amino-5-(4-hydroxybenzyl)-6-(D-ribitylimino)-5,6-dihydrouracil + 2-iminoacetate + 5'-deoxyadenosine + L-methionine + H(+). It participates in cofactor biosynthesis; coenzyme F0 biosynthesis. Catalyzes the radical-mediated synthesis of 5-amino-5-(4-hydroxybenzyl)-6-(D-ribitylimino)-5,6-dihydrouracil from 5-amino-6-(D-ribitylamino)uracil and L-tyrosine. In Methanococcus vannielii (strain ATCC 35089 / DSM 1224 / JCM 13029 / OCM 148 / SB), this protein is 5-amino-6-(D-ribitylamino)uracil--L-tyrosine 4-hydroxyphenyl transferase.